A 148-amino-acid chain; its full sequence is MKEIVSKVKEIAESACKKYNLELFDIKYYNKSGKWFLEIVIDNPLDYVSTKDCENISREVEFQLDKLDIIPQRYYLTVSSPGLDRPLRSIDDFKRFINNKVKIKLENETIIGYIKDVKDSVIFLEENNKKIKEIKYNQIKKANLEIDI.

It belongs to the RimP family.

The protein localises to the cytoplasm. Functionally, required for maturation of 30S ribosomal subunits. The sequence is that of Ribosome maturation factor RimP from Thermosipho africanus (strain TCF52B).